The primary structure comprises 533 residues: Calcium-dependent protein kinase 8 (533 aa).

The interval 1 to 21 (MGNCCASPGSETGSKKGKPKI) is disordered. Glycine 2 is lipidated: N-myristoyl glycine. The region spanning 57 to 315 (YDLGREVGRG…AAQVLEHSWI (259 aa)) is the Protein kinase domain. ATP contacts are provided by residues 63 to 71 (VGRGEFGIT) and lysine 86. Aspartate 181 functions as the Proton acceptor in the catalytic mechanism. Serine 221 is subject to Phosphoserine. Residues 321 to 351 (APNVSLGETVKARLKQFSVMNKLKKRALRVI) form an autoinhibitory domain region. EF-hand domains lie at 358-394 (EEVA…GQQQ), 395-430 (IPDT…LKKM), 431-466 (ANDE…EVDT), and 467-502 (NSEE…GTDW). The Ca(2+) site is built by aspartate 371, threonine 375, lysine 377, glutamate 382, aspartate 408, aspartate 410, aspartate 412, threonine 414, glutamate 419, aspartate 444, asparagine 446, serine 448, tyrosine 450, glutamate 455, aspartate 480, aspartate 482, aspartate 484, and arginine 486. Residue serine 488 is modified to Phosphoserine. Glutamate 491 lines the Ca(2+) pocket. At serine 526 the chain carries Phosphoserine.

The protein belongs to the protein kinase superfamily. Ser/Thr protein kinase family. CDPK subfamily.

It is found in the cell membrane. The enzyme catalyses L-seryl-[protein] + ATP = O-phospho-L-seryl-[protein] + ADP + H(+). The catalysed reaction is L-threonyl-[protein] + ATP = O-phospho-L-threonyl-[protein] + ADP + H(+). Its activity is regulated as follows. Activated by calcium. Autophosphorylation may play an important role in the regulation of the kinase activity. In terms of biological role, may play a role in signal transduction pathways that involve calcium as a second messenger. This Arabidopsis thaliana (Mouse-ear cress) protein is Calcium-dependent protein kinase 8 (CPK8).